The sequence spans 530 residues: Transcription factor SPT20 homolog (530 aa).

Ser296 carries the post-translational modification Phosphoserine. The interval 419–530 (CPVKMSHSSS…PASSSQRHES (112 aa)) is disordered. Composition is skewed to low complexity over residues 424–436 (SHSS…LNSG) and 466–475 (SSSGNSSSGN). Thr490 is modified (phosphothreonine). Low complexity predominate over residues 514 to 530 (LSPAALSPASSSQRHES). Residues Ser515 and Ser520 each carry the phosphoserine modification.

This sequence belongs to the SPT20 family. In terms of assembly, interacts with ATG9A. Interacts with MAPK14.

Functionally, required for MAP kinase p38 (MAPK11, MAPK12, MAPK13 and/or MAPK14) activation during gastrulation. Required for down-regulation of E-cadherin during gastrulation by regulating E-cadherin protein level downstream from NCK-interacting kinase (NIK) and independently of the regulation of transcription by FGF signaling and Snail. Required for starvation-induced ATG9A trafficking during autophagy. The polypeptide is Transcription factor SPT20 homolog (Supt20h) (Rattus norvegicus (Rat)).